The primary structure comprises 277 residues: Putative thiosulfate sulfurtransferase (277 aa).

2 Rhodanese domains span residues aspartate 18 to threonine 125 and serine 154 to glutamate 274. Cysteine 233 (cysteine persulfide intermediate) is an active-site residue. Arginine 238 is a substrate binding site.

The enzyme catalyses thiosulfate + hydrogen cyanide = thiocyanate + sulfite + 2 H(+). In terms of biological role, may be a sulfotransferase involved in the formation of thiosulfate. The polypeptide is Putative thiosulfate sulfurtransferase (cysA) (Mycobacterium leprae (strain TN)).